The primary structure comprises 88 residues: Beta-insect excitatory toxin LqhIT1b (88 aa).

A signal peptide spans 1–18 (MKFFLLFLVVLPIMGVLG). The LCN-type CS-alpha/beta domain maps to 20–83 (KNGYAVDSKG…ISDTTKKYCD (64 aa)). Intrachain disulfides connect Cys34–Cys55, Cys40–Cys60, Cys44–Cys62, and Cys56–Cys82.

It belongs to the long (4 C-C) scorpion toxin superfamily. Sodium channel inhibitor family. Beta subfamily. As to expression, expressed by the venom gland.

It localises to the secreted. Excitatory insect toxins induce a spastic paralysis. They bind voltage-independently at site-4 of sodium channels (Nav) and shift the voltage of activation toward more negative potentials thereby affecting sodium channel activation and promoting spontaneous and repetitive firing. The polypeptide is Beta-insect excitatory toxin LqhIT1b (Leiurus hebraeus (Hebrew deathstalker scorpion)).